A 240-amino-acid chain; its full sequence is ATP synthase subunit a (240 aa).

5 consecutive transmembrane segments (helical) span residues 21–41, 83–103, 116–136, 184–204, and 207–227; these read LSSMLMLTVTAAIVFLIAMLF, AVTLLLFIFVANMLGLPFAII, DPTVTLTLSTLMVLLTHFYGV, LLGLLATLGTAGAAGMLGAAI, and LIWQGFSIFVGSIQAYIFVML.

Belongs to the ATPase A chain family. As to quaternary structure, F-type ATPases have 2 components, CF(1) - the catalytic core - and CF(0) - the membrane proton channel. CF(1) has five subunits: alpha(3), beta(3), gamma(1), delta(1), epsilon(1). CF(0) has three main subunits: a(1), b(2) and c(9-12). The alpha and beta chains form an alternating ring which encloses part of the gamma chain. CF(1) is attached to CF(0) by a central stalk formed by the gamma and epsilon chains, while a peripheral stalk is formed by the delta and b chains.

The protein localises to the cell membrane. In terms of biological role, key component of the proton channel; it plays a direct role in the translocation of protons across the membrane. The polypeptide is ATP synthase subunit a (Macrococcus caseolyticus (strain JCSC5402) (Macrococcoides caseolyticum)).